We begin with the raw amino-acid sequence, 426 residues long: Putative FBD-associated F-box protein At5g53635 (426 aa).

One can recognise an F-box domain in the interval 1 to 45 (MISQLPDPLICHILSHLPIKDLVTTRVLSTRWRSLWLWLPCLELN). The region spanning 353–405 (MIQFGSSLVPECLLSSLEFVDIRIPFRGHLEVMKLVRYFLENSAILKKLSLDH) is the FBD domain.

The sequence is that of Putative FBD-associated F-box protein At5g53635 from Arabidopsis thaliana (Mouse-ear cress).